Here is a 216-residue protein sequence, read N- to C-terminus: GTP cyclohydrolase 1 (216 aa).

Residues 1–33 (MPQARGEGATPPTSLPNPSLKGVPLPDNPNNLE) are disordered. A compositionally biased stretch (low complexity) spans 24–33 (PLPDNPNNLE). Residues C102, H105, and C173 each coordinate Zn(2+).

Belongs to the GTP cyclohydrolase I family. Toroid-shaped homodecamer, composed of two pentamers of five dimers.

It carries out the reaction GTP + H2O = 7,8-dihydroneopterin 3'-triphosphate + formate + H(+). Its pathway is cofactor biosynthesis; 7,8-dihydroneopterin triphosphate biosynthesis; 7,8-dihydroneopterin triphosphate from GTP: step 1/1. This is GTP cyclohydrolase 1 (folE) from Deinococcus radiodurans (strain ATCC 13939 / DSM 20539 / JCM 16871 / CCUG 27074 / LMG 4051 / NBRC 15346 / NCIMB 9279 / VKM B-1422 / R1).